A 136-amino-acid chain; its full sequence is MGKFMKPGKVVLVLAGRYSGRKAVIVKNIDDGTSDRPYSHALVAGIDRYPRKVTAAMGKKKIAKRSKIKSFVKVYNYNHLMPTRYSVDIPLDKTVVNKDVFRDPALKRKARREAKVKFEERYKTGKNKWFFQKLRF.

The KOW domain occupies 5–40 (MKPGKVVLVLAGRYSGRKAVIVKNIDDGTSDRPYSH). K27 and K93 each carry N6-acetyllysine.

The protein belongs to the eukaryotic ribosomal protein eL27 family. In terms of assembly, component of the large ribosomal subunit. Interacts with RRP1B. Component of the large ribosomal subunit. Interacts with RRP1B. Interacts with DHX33.

It is found in the cytoplasm. The protein localises to the cytosol. The protein resides in the rough endoplasmic reticulum. In terms of biological role, component of the large ribosomal subunit. Required for proper rRNA processing and maturation of 28S and 5.8S rRNAs. This chain is Large ribosomal subunit protein eL27 (RPL27), found in Bos taurus (Bovine).